A 164-amino-acid polypeptide reads, in one-letter code: UPF0114 protein BCI_0033 (164 aa).

A run of 3 helical transmembrane segments spans residues 15–35, 53–73, and 136–156; these read LLFP…LKFF, LILI…LVMV, and IMWC…MAYI.

This sequence belongs to the UPF0114 family.

It localises to the cell membrane. The protein is UPF0114 protein BCI_0033 of Baumannia cicadellinicola subsp. Homalodisca coagulata.